The sequence spans 339 residues: Autophagy protein 5 (339 aa).

A Glycyl lysine isopeptide (Lys-Gly) (interchain with G-Cter in ATG12) cross-link involves residue Lys168. Positions 219-230 (SSNSTQPSRPSS) are enriched in low complexity. A disordered region spans residues 219-241 (SSNSTQPSRPSSADPSGPPRAPD).

This sequence belongs to the ATG5 family. Conjugated with ATG12. Conjugated to ATG12; which is essential for autophagy.

The protein resides in the preautophagosomal structure membrane. Its function is as follows. Involved in cytoplasm to vacuole transport (Cvt) and autophagic vesicle formation. Autophagy is essential for maintenance of amino acid levels and protein synthesis under nitrogen starvation. Required for selective autophagic degradation of the nucleus (nucleophagy). Also required for mitophagy, which eliminates defective or superfluous mitochondria in order to fulfill cellular energy requirements and prevent excess ROS production. Conjugation with ATG12, through a ubiquitin-like conjugating system involving ATG7 as an E1-like activating enzyme and ATG10 as an E2-like conjugating enzyme, is essential for its function. The ATG12-ATG5 conjugate acts as an E3-like enzyme which is required for lipidation of ATG8 and ATG8 association to the vesicle membranes. The sequence is that of Autophagy protein 5 (ATG5) from Cryptococcus neoformans var. neoformans serotype D (strain B-3501A) (Filobasidiella neoformans).